The sequence spans 123 residues: D-ribose pyranase (123 aa).

The active-site Proton donor is the H20. Residues D28, H90, and 112-114 (YAN) contribute to the substrate site.

The protein belongs to the RbsD / FucU family. RbsD subfamily. In terms of assembly, homodecamer.

It localises to the cytoplasm. It catalyses the reaction beta-D-ribopyranose = beta-D-ribofuranose. The protein operates within carbohydrate metabolism; D-ribose degradation; D-ribose 5-phosphate from beta-D-ribopyranose: step 1/2. Its function is as follows. Catalyzes the interconversion of beta-pyran and beta-furan forms of D-ribose. The protein is D-ribose pyranase of Corynebacterium glutamicum (strain R).